The chain runs to 142 residues: Large-conductance mechanosensitive channel (142 aa).

The next 2 helical transmembrane spans lie at 10 to 30 and 86 to 106; these read FAIK…AAFS and GNFI…FLMV.

It belongs to the MscL family. In terms of assembly, homopentamer.

The protein resides in the cell inner membrane. Functionally, channel that opens in response to stretch forces in the membrane lipid bilayer. May participate in the regulation of osmotic pressure changes within the cell. This is Large-conductance mechanosensitive channel from Polaromonas naphthalenivorans (strain CJ2).